The chain runs to 125 residues: Protein ApaG (125 aa).

One can recognise an ApaG domain in the interval 1–125; that stretch reads MINSPRVCIQ…FRLAVPTLIH (125 aa).

This Escherichia coli (strain SE11) protein is Protein ApaG.